We begin with the raw amino-acid sequence, 460 residues long: NADH-quinone oxidoreductase subunit N (460 aa).

A run of 13 helical transmembrane segments spans residues 2–22 (LLPE…AVML), 28–48 (IVAN…LKYS), 65–85 (ANIA…MIIY), 104–124 (ILLS…LLLF), 155–175 (FILG…IYGF), 196–216 (LGLV…LSSA), 230–250 (PIAS…AILL), 263–283 (ISYN…ALGA), 292–312 (LMAY…LLRT), 321–341 (LYML…IMLL), 363–383 (IAAA…LAGF), 400–420 (LLAY…LKII), and 438–458 (YGLL…SFII).

The protein belongs to the complex I subunit 2 family. In terms of assembly, NDH-1 is composed of 14 different subunits. Subunits NuoA, H, J, K, L, M, N constitute the membrane sector of the complex.

It is found in the cell inner membrane. The enzyme catalyses a quinone + NADH + 5 H(+)(in) = a quinol + NAD(+) + 4 H(+)(out). Functionally, NDH-1 shuttles electrons from NADH, via FMN and iron-sulfur (Fe-S) centers, to quinones in the respiratory chain. The immediate electron acceptor for the enzyme in this species is believed to be ubiquinone. Couples the redox reaction to proton translocation (for every two electrons transferred, four hydrogen ions are translocated across the cytoplasmic membrane), and thus conserves the redox energy in a proton gradient. The sequence is that of NADH-quinone oxidoreductase subunit N from Rickettsia bellii (strain RML369-C).